The chain runs to 419 residues: Creatine kinase S-type, mitochondrial (419 aa).

A mitochondrion-targeting transit peptide spans 1–39; it reads MASIFSKLLTGRNASLLFATMGTSVLTTGYLLNRQKVCA. Residues 40–64 form a cardiolipin-binding region; it reads EVREQPRLFPPSADYPDLRKHNNCM. In terms of domain architecture, Phosphagen kinase N-terminal spans 46–132; sequence RLFPPSADYP…FDPVIKLRHN (87 aa). Positions 159 to 401 constitute a Phosphagen kinase C-terminal domain; it reads YVLSSRVRTG…NYLVDCEKKL (243 aa). ATP-binding positions include 162-166 and H225; that span reads SSRVR. Y255 is subject to Phosphotyrosine. ATP contacts are provided by residues R270, R326, 354-359, and D369; that span reads RGTGGV. T356 carries the phosphothreonine modification.

The protein belongs to the ATP:guanido phosphotransferase family. As to quaternary structure, exists as an octamer composed of four CKMT2 homodimers. Sarcomere-specific. Found only in heart and skeletal muscles.

It is found in the mitochondrion inner membrane. It catalyses the reaction creatine + ATP = N-phosphocreatine + ADP + H(+). In terms of biological role, reversibly catalyzes the transfer of phosphate between ATP and various phosphogens (e.g. creatine phosphate). Creatine kinase isoenzymes play a central role in energy transduction in tissues with large, fluctuating energy demands, such as skeletal muscle, heart, brain and spermatozoa. In Homo sapiens (Human), this protein is Creatine kinase S-type, mitochondrial (CKMT2).